The sequence spans 60 residues: Large ribosomal subunit protein bL32 (60 aa).

A disordered region spans residues 1 to 60 (MAVQQNKKSPSKRGMHRSHNALTVPGIAVEPTTGETHLRHHISPNGFYRGRQVLKNKSEA). Positions 9-19 (SPSKRGMHRSH) are enriched in basic residues.

Belongs to the bacterial ribosomal protein bL32 family.

The polypeptide is Large ribosomal subunit protein bL32 (Paracidovorax citrulli (strain AAC00-1) (Acidovorax citrulli)).